A 123-amino-acid chain; its full sequence is Small ribosomal subunit protein uS13 (123 aa).

A disordered region spans residues 97–123 (PVRGQRTRSNARTRKGPRPSRIKKKGK). Basic residues predominate over residues 101–123 (QRTRSNARTRKGPRPSRIKKKGK).

It belongs to the universal ribosomal protein uS13 family. As to quaternary structure, part of the 30S ribosomal subunit. Forms a loose heterodimer with protein S19. Forms two bridges to the 50S subunit in the 70S ribosome.

In terms of biological role, located at the top of the head of the 30S subunit, it contacts several helices of the 16S rRNA. In the 70S ribosome it contacts the 23S rRNA (bridge B1a) and protein L5 of the 50S subunit (bridge B1b), connecting the 2 subunits; these bridges are implicated in subunit movement. Contacts the tRNAs in the A and P-sites. The chain is Small ribosomal subunit protein uS13 from Fervidobacterium nodosum (strain ATCC 35602 / DSM 5306 / Rt17-B1).